A 356-amino-acid chain; its full sequence is Butyrate kinase (356 aa).

Belongs to the acetokinase family.

Its subcellular location is the cytoplasm. It carries out the reaction butanoate + ATP = butanoyl phosphate + ADP. It participates in lipid metabolism; butanoate metabolism. Functionally, catalyzes the conversion of butyryl-CoA through butyryl phosphate to butyrate. In Clostridium perfringens (strain ATCC 13124 / DSM 756 / JCM 1290 / NCIMB 6125 / NCTC 8237 / Type A), this protein is Butyrate kinase (buk).